Reading from the N-terminus, the 136-residue chain is ATP synthase epsilon chain (136 aa).

This sequence belongs to the ATPase epsilon chain family. As to quaternary structure, F-type ATPases have 2 components, CF(1) - the catalytic core - and CF(0) - the membrane proton channel. CF(1) has five subunits: alpha(3), beta(3), gamma(1), delta(1), epsilon(1). CF(0) has three main subunits: a, b and c.

It is found in the cell inner membrane. Its function is as follows. Produces ATP from ADP in the presence of a proton gradient across the membrane. The protein is ATP synthase epsilon chain of Agrobacterium fabrum (strain C58 / ATCC 33970) (Agrobacterium tumefaciens (strain C58)).